Here is a 356-residue protein sequence, read N- to C-terminus: MSTVTITDLARENVRNLTPYQSARRLGGNGDVWLNANEYPTAVEFQLTQQTLNRYPECQPKAVIENYAQYAGVKPEQVLVSRGADEGIELLIRAFCEPGKDAILYCPPTYGMYSVSAETIGVECRTVPTLENWQLDLQGISDKLDGVKVVYVCSPNNPTGQLINPQDFRTLLELTRGKAIVVADEAYIEFCPQASLAGWLAEYPHLAILRTLSKAFALAGLRCGFTLANEEVINLLMKVIAPYPLSTPVADIAAQALSPQGIVAMRERVAQIIAEREYLIAALKEIPCVEQVFDSETNYILARFKASSAVFKSLWDQGIILRDQNKQPSLSGCLRITVGTREESQRVIDALRAEQV.

At Lys-214 the chain carries N6-(pyridoxal phosphate)lysine.

Belongs to the class-II pyridoxal-phosphate-dependent aminotransferase family. Histidinol-phosphate aminotransferase subfamily. In terms of assembly, homodimer. The cofactor is pyridoxal 5'-phosphate.

The catalysed reaction is L-histidinol phosphate + 2-oxoglutarate = 3-(imidazol-4-yl)-2-oxopropyl phosphate + L-glutamate. Its pathway is amino-acid biosynthesis; L-histidine biosynthesis; L-histidine from 5-phospho-alpha-D-ribose 1-diphosphate: step 7/9. This Escherichia coli (strain 55989 / EAEC) protein is Histidinol-phosphate aminotransferase.